The primary structure comprises 384 residues: UPF0284 protein alr0297 (384 aa).

The protein belongs to the UPF0284 family.

The protein is UPF0284 protein alr0297 of Nostoc sp. (strain PCC 7120 / SAG 25.82 / UTEX 2576).